A 160-amino-acid polypeptide reads, in one-letter code: Cytochrome b6-f complex subunit 4 (160 aa).

Helical transmembrane passes span 36–56 (LLYI…GLAV), 95–115 (LLGI…PFIE), and 128–148 (IAMA…IGAC).

It belongs to the cytochrome b family. PetD subfamily. The 4 large subunits of the cytochrome b6-f complex are cytochrome b6, subunit IV (17 kDa polypeptide, PetD), cytochrome f and the Rieske protein, while the 4 small subunits are PetG, PetL, PetM and PetN. The complex functions as a dimer.

It localises to the cellular thylakoid membrane. Its function is as follows. Component of the cytochrome b6-f complex, which mediates electron transfer between photosystem II (PSII) and photosystem I (PSI), cyclic electron flow around PSI, and state transitions. The polypeptide is Cytochrome b6-f complex subunit 4 (Prochlorococcus marinus (strain MIT 9313)).